The following is a 501-amino-acid chain: Glycerol kinase (501 aa).

Thr-17 lines the ADP pocket. Positions 17, 18, and 19 each coordinate ATP. Thr-17 provides a ligand contact to sn-glycerol 3-phosphate. Arg-21 lines the ADP pocket. Residues Arg-87, Glu-88, Tyr-139, and Asp-243 each contribute to the sn-glycerol 3-phosphate site. Glycerol contacts are provided by Arg-87, Glu-88, Tyr-139, Asp-243, and Gln-244. The ADP site is built by Thr-265 and Gly-308. Thr-265, Gly-308, Gln-312, and Gly-409 together coordinate ATP. ADP contacts are provided by Gly-409 and Asn-413.

It belongs to the FGGY kinase family.

The enzyme catalyses glycerol + ATP = sn-glycerol 3-phosphate + ADP + H(+). Its pathway is polyol metabolism; glycerol degradation via glycerol kinase pathway; sn-glycerol 3-phosphate from glycerol: step 1/1. Its activity is regulated as follows. Inhibited by fructose 1,6-bisphosphate (FBP). Functionally, key enzyme in the regulation of glycerol uptake and metabolism. Catalyzes the phosphorylation of glycerol to yield sn-glycerol 3-phosphate. This is Glycerol kinase from Pseudomonas syringae pv. syringae (strain B728a).